We begin with the raw amino-acid sequence, 801 residues long: MGRCEFYHPFTPYRIQLELMQQIYGLLESGKKMGIFESPTGTGKTLSLICSTFTWLREHKAGYLQGSTGAQDSEEDSEDEPAWVKENYEQSVLADVTASMRAYEQRLAAVDTDLLVKGAAKRQRVEVAVERPDDGAEFLPDAYHSDVEERPSHAGGRGQLRKQLDADIKRLLRKLDEPDAADKSRLAANPLKVYFASRTHTQLGQFAAQLRLPQFPPSLAGLEQERVKFLPLGSRKQLCIHKKVSKVKSDGINEACMDAVSKSECSFFSAAREPDIIRQFQDQAFSTIQDIEDLVGIGNTLHACPYYSSRELIEGAEVITLPYQHLLLENARKTMGIDLRDSIIVIDEAHNLIDTINSIHSASISLTELRQCKLALQAYLAKFKTRLNSGNRVNLLKLIKMVDVLSQFIETQYKNGKRINDPNDIFMGTSMDVVNIHKLEKYMKTSKVAYKIDKYIQATTSNDLQDRGSRDIKQPILFKVASFLKTLANPSEEGQFFFENGHVLKYMLLEPSEVLKSIVTEAKCVILAGGTMEPVNDFFTQLVPYLAPTDVTTYSCGHVIPDDNLNAFIVSENFEFTFANREDIALIERLFHFIYQLASRVPFGMVVFFSSYKYIDFVVKTWTDRGLLSRLDAIKRIYHETSDGADVLKGYSETIQSEKKGAILLAVVGGRLSEGINFENELARAVVLVGLPFPNMFSGEMIVKQQHIKEKVIRNGGTQEDVNKAVREFYENICMKAVNQSVGRAIRHASDFANVYLIDKRYSGPRIQQKLSDWVRKRIQSASNIPKILSDTEAFFSGKGL.

The Helicase ATP-binding domain maps to 2-412 (GRCEFYHPFT…DVLSQFIETQ (411 aa)). 38 to 45 (SPTGTGKT) is a binding site for ATP. Residues C239, C256, C265, and C304 each coordinate [4Fe-4S] cluster. Residues 347 to 350 (DEAH) carry the DEAH box motif.

Belongs to the DEAD box helicase family. DEAH subfamily. DDX11/CHL1 sub-subfamily. Requires [4Fe-4S] cluster as cofactor.

It is found in the nucleus. The enzyme catalyses Couples ATP hydrolysis with the unwinding of duplex DNA at the replication fork by translocating in the 5'-3' direction. This creates two antiparallel DNA single strands (ssDNA). The leading ssDNA polymer is the template for DNA polymerase III holoenzyme which synthesizes a continuous strand.. It catalyses the reaction ATP + H2O = ADP + phosphate + H(+). In terms of biological role, ATP-dependent DNA helicase important for chromosome transmission and normal cell cycle progression in G(2)/M. May have a role in changing DNA topology to allow the loading of proteins involved in maintaining sister chromatid cohesion in the vicinity of the centromeres. Has a specific role in chromosome segregation during meiosis II. The chain is ATP-dependent DNA helicase CHL1 (CHL1) from Eremothecium gossypii (strain ATCC 10895 / CBS 109.51 / FGSC 9923 / NRRL Y-1056) (Yeast).